The chain runs to 324 residues: NADH-ubiquinone oxidoreductase chain 1 (324 aa).

8 helical membrane-spanning segments follow: residues 9-29 (VLNP…LTLL), 75-95 (FLFL…WAPM), 106-126 (LGVL…LGSG), 146-166 (ISYE…TGGF), 177-197 (SIWL…STLA), 237-257 (ILLM…IPAL), 259-279 (ELTA…FLWV), and 299-319 (FLPM…ALAG).

It belongs to the complex I subunit 1 family.

Its subcellular location is the mitochondrion inner membrane. It carries out the reaction a ubiquinone + NADH + 5 H(+)(in) = a ubiquinol + NAD(+) + 4 H(+)(out). Its function is as follows. Core subunit of the mitochondrial membrane respiratory chain NADH dehydrogenase (Complex I) that is believed to belong to the minimal assembly required for catalysis. Complex I functions in the transfer of electrons from NADH to the respiratory chain. The immediate electron acceptor for the enzyme is believed to be ubiquinone. In Thymallus arcticus (Arctic grayling), this protein is NADH-ubiquinone oxidoreductase chain 1 (MT-ND1).